An 89-amino-acid chain; its full sequence is Dynein light chain LC6, flagellar outer arm (89 aa).

It belongs to the dynein light chain family. Consists of at least 3 heavy chains (alpha, beta and gamma), 2 intermediate chains and 8 light chains.

The protein localises to the cytoplasm. The protein resides in the cytoskeleton. Its subcellular location is the flagellum axoneme. This Heliocidaris crassispina (Sea urchin) protein is Dynein light chain LC6, flagellar outer arm.